A 211-amino-acid polypeptide reads, in one-letter code: NADH-quinone oxidoreductase subunit A (211 aa).

A run of 3 helical transmembrane segments spans residues 7–27, 61–81, and 88–108; these read WSALAFILAAIGLVIFMLVVP, FYLVAIFFVIFDLEALYLYAY, and VGWIGYATALIFVVDLLIGLI.

It belongs to the complex I subunit 3 family. As to quaternary structure, NDH-1 is composed of 14 different subunits. Subunits NuoA, H, J, K, L, M, N constitute the membrane sector of the complex.

The protein resides in the cell inner membrane. The enzyme catalyses a quinone + NADH + 5 H(+)(in) = a quinol + NAD(+) + 4 H(+)(out). Its function is as follows. NDH-1 shuttles electrons from NADH, via FMN and iron-sulfur (Fe-S) centers, to quinones in the respiratory chain. The immediate electron acceptor for the enzyme in this species is believed to be ubiquinone. Couples the redox reaction to proton translocation (for every two electrons transferred, four hydrogen ions are translocated across the cytoplasmic membrane), and thus conserves the redox energy in a proton gradient. The chain is NADH-quinone oxidoreductase subunit A from Psychrobacter sp. (strain PRwf-1).